A 266-amino-acid polypeptide reads, in one-letter code: Ankyrin repeat domain-containing protein 45 (266 aa).

Acidic residues-rich tracts occupy residues Met1–Ser11 and Gln18–Glu32. A disordered region spans residues Met1–Ala43. ANK repeat units follow at residues Val76–Glu105 and Arg109–Ala138.

The protein resides in the cytoplasm. It is found in the midbody. The protein localises to the midbody ring. Its subcellular location is the cleavage furrow. Functionally, may play a role during cell division. The protein is Ankyrin repeat domain-containing protein 45 of Homo sapiens (Human).